The primary structure comprises 434 residues: Serine hydroxymethyltransferase (434 aa).

Residues Leu-133 and 137-139 (GHL) each bind (6S)-5,6,7,8-tetrahydrofolate. At Lys-242 the chain carries N6-(pyridoxal phosphate)lysine.

It belongs to the SHMT family. Homodimer. Pyridoxal 5'-phosphate serves as cofactor.

Its subcellular location is the cytoplasm. It carries out the reaction (6R)-5,10-methylene-5,6,7,8-tetrahydrofolate + glycine + H2O = (6S)-5,6,7,8-tetrahydrofolate + L-serine. The protein operates within one-carbon metabolism; tetrahydrofolate interconversion. It functions in the pathway amino-acid biosynthesis; glycine biosynthesis; glycine from L-serine: step 1/1. Catalyzes the reversible interconversion of serine and glycine with tetrahydrofolate (THF) serving as the one-carbon carrier. This reaction serves as the major source of one-carbon groups required for the biosynthesis of purines, thymidylate, methionine, and other important biomolecules. Also exhibits THF-independent aldolase activity toward beta-hydroxyamino acids, producing glycine and aldehydes, via a retro-aldol mechanism. This is Serine hydroxymethyltransferase from Bradyrhizobium sp. (strain BTAi1 / ATCC BAA-1182).